A 91-amino-acid polypeptide reads, in one-letter code: Probable Fe(2+)-trafficking protein (91 aa).

The protein belongs to the Fe(2+)-trafficking protein family.

Functionally, could be a mediator in iron transactions between iron acquisition and iron-requiring processes, such as synthesis and/or repair of Fe-S clusters in biosynthetic enzymes. The polypeptide is Probable Fe(2+)-trafficking protein (Glaesserella parasuis serovar 5 (strain SH0165) (Haemophilus parasuis)).